Reading from the N-terminus, the 188-residue chain is UPF0301 protein Smlt1098 (188 aa).

The protein belongs to the UPF0301 (AlgH) family.

In Stenotrophomonas maltophilia (strain K279a), this protein is UPF0301 protein Smlt1098.